A 132-amino-acid polypeptide reads, in one-letter code: uncharacterized protein (132 aa).

3 consecutive transmembrane segments (helical) span residues 19–39 (FTWIFGAWDIPLITLLVFIFL), 58–78 (IGLRGITKKGLILVVLLVAVM), and 93–113 (LIAYFYIMNEGISILENCAAL).

This sequence belongs to the bacteriophage holin family. Cp-1 holin subfamily.

The protein localises to the cell membrane. This is an uncharacterized protein from Clostridium perfringens.